Consider the following 175-residue polypeptide: RNA pyrophosphohydrolase (175 aa).

The Nudix hydrolase domain maps to 6 to 149 (GYRPNVGIVI…KRDVYRRVMK (144 aa)). Positions 38–59 (GGINAGETAEQAMYRELFEEVG) match the Nudix box motif.

The protein belongs to the Nudix hydrolase family. RppH subfamily. A divalent metal cation is required as a cofactor.

Functionally, accelerates the degradation of transcripts by removing pyrophosphate from the 5'-end of triphosphorylated RNA, leading to a more labile monophosphorylated state that can stimulate subsequent ribonuclease cleavage. The sequence is that of RNA pyrophosphohydrolase from Sodalis glossinidius (strain morsitans).